An 89-amino-acid polypeptide reads, in one-letter code: Small ribosomal subunit protein uS15 (89 aa).

The protein belongs to the universal ribosomal protein uS15 family. In terms of assembly, part of the 30S ribosomal subunit. Forms a bridge to the 50S subunit in the 70S ribosome, contacting the 23S rRNA.

Its function is as follows. One of the primary rRNA binding proteins, it binds directly to 16S rRNA where it helps nucleate assembly of the platform of the 30S subunit by binding and bridging several RNA helices of the 16S rRNA. Forms an intersubunit bridge (bridge B4) with the 23S rRNA of the 50S subunit in the ribosome. The sequence is that of Small ribosomal subunit protein uS15 from Paenarthrobacter aurescens (strain TC1).